Here is a 456-residue protein sequence, read N- to C-terminus: Methylenetetrahydrofolate--tRNA-(uracil-5-)-methyltransferase TrmFO (456 aa).

12–17 (GGGLAG) is an FAD binding site.

Belongs to the MnmG family. TrmFO subfamily. FAD serves as cofactor.

The protein resides in the cytoplasm. The enzyme catalyses uridine(54) in tRNA + (6R)-5,10-methylene-5,6,7,8-tetrahydrofolate + NADH + H(+) = 5-methyluridine(54) in tRNA + (6S)-5,6,7,8-tetrahydrofolate + NAD(+). It catalyses the reaction uridine(54) in tRNA + (6R)-5,10-methylene-5,6,7,8-tetrahydrofolate + NADPH + H(+) = 5-methyluridine(54) in tRNA + (6S)-5,6,7,8-tetrahydrofolate + NADP(+). Its function is as follows. Catalyzes the folate-dependent formation of 5-methyl-uridine at position 54 (M-5-U54) in all tRNAs. The sequence is that of Methylenetetrahydrofolate--tRNA-(uracil-5-)-methyltransferase TrmFO from Picosynechococcus sp. (strain ATCC 27264 / PCC 7002 / PR-6) (Agmenellum quadruplicatum).